Here is a 197-residue protein sequence, read N- to C-terminus: Fe/S biogenesis protein NfuA (197 aa).

[4Fe-4S] cluster-binding residues include Cys155 and Cys158.

It belongs to the NfuA family. In terms of assembly, homodimer. Requires [4Fe-4S] cluster as cofactor.

Its function is as follows. Involved in iron-sulfur cluster biogenesis. Binds a 4Fe-4S cluster, can transfer this cluster to apoproteins, and thereby intervenes in the maturation of Fe/S proteins. Could also act as a scaffold/chaperone for damaged Fe/S proteins. The chain is Fe/S biogenesis protein NfuA from Pseudomonas savastanoi pv. phaseolicola (strain 1448A / Race 6) (Pseudomonas syringae pv. phaseolicola (strain 1448A / Race 6)).